Consider the following 643-residue polypeptide: Leukocyte immunoglobulin-like receptor subfamily B member 5 (643 aa).

An N-terminal signal peptide occupies residues 1–23 (MTLTLSVLICLGLNVGPRTCVQA). Residues 24–458 (GTLPKPTLWA…PQSGLGRHLG (435 aa)) are Extracellular-facing. Ig-like C2-type domains lie at 27-116 (PKPT…LELV), 111-228 (DPLE…SLLI), 224-313 (PSLL…DPLD), and 337-418 (GENV…LVVS). Cys49 and Cys98 are disulfide-bonded. A glycan (N-linked (GlcNAc...) asparagine) is linked at Asn139. 2 cysteine pairs are disulfide-bonded: Cys144–Cys195 and Cys244–Cys295. Residues Asn279 and Asn339 are each glycosylated (N-linked (GlcNAc...) asparagine). Residues Cys344 and Cys395 are joined by a disulfide bond. The segment covering 417 to 433 (VSGPSGDPSLSPTGSTP) has biased composition (low complexity). The segment at 417–449 (VSGPSGDPSLSPTGSTPTPGPEDQPLTPTGLDP) is disordered. A helical membrane pass occupies residues 459–479 (VVTGVSVAFVLLLFLLLFLLL). The Cytoplasmic portion of the chain corresponds to 480-643 (RHRHQSKHRT…PSIYAPLAIH (164 aa)). The disordered stretch occupies residues 493-643 (FYRPAGAAGP…PSIYAPLAIH (151 aa)). Ser514 carries the phosphoserine modification. Basic and acidic residues-rich tracts occupy residues 531–549 (TQPK…RDED), 557–567 (EVKHSRPRREM), and 579–592 (LDTK…DRQM). The ITIM motif 1 signature appears at 605–610 (VTYAQL). Residues 615 to 631 (LRREATEPPPSQEREPP) are compositionally biased toward basic and acidic residues. The short motif at 635 to 640 (SIYAPL) is the ITIM motif 2 element.

It localises to the membrane. Its function is as follows. May act as receptor for class I MHC antigens. The protein is Leukocyte immunoglobulin-like receptor subfamily B member 5 (LILRB5) of Pan troglodytes (Chimpanzee).